We begin with the raw amino-acid sequence, 139 residues long: Gene 39 protein (139 aa).

The sequence is that of Gene 39 protein (39) from Mycobacterium (Mycobacteriophage L5).